We begin with the raw amino-acid sequence, 360 residues long: Phospho-N-acetylmuramoyl-pentapeptide-transferase (360 aa).

Residues 1 to 25 (MLVWLAEHLVKYYSGFNVFSYLTFR) lie on the Periplasmic side of the membrane. A helical membrane pass occupies residues 26–46 (AIVSLLTALFISLWMGPRMIA). The Cytoplasmic portion of the chain corresponds to 47-71 (HLQKLSFGQVVRNDGPESHFSKRGT). The helical transmembrane segment at 72–92 (PTMGGIMILTAIVISVLLWAY) threads the bilayer. A topological domain (periplasmic) is located at residue Pro93. A helical transmembrane segment spans residues 94 to 114 (SNPYVWCVLVVLVGYGVIGFV). Over 115–131 (DDYRKVVRKDTKGLIAR) the chain is Cytoplasmic. A helical membrane pass occupies residues 132–152 (WKYFWMSVIALGVAFALYLAG). Over 153 to 167 (KDTPATQLVVPFFKD) the chain is Periplasmic. A helical membrane pass occupies residues 168 to 188 (VMPQLGLFYILLAYFVIVGTG). At 189–198 (NAVNLTDGLD) the chain is on the cytoplasmic side. The chain crosses the membrane as a helical span at residues 199 to 219 (GLAIMPTVFVAGGFALVAWAT). Residues 220–235 (GNMNFASYLHIPYLRH) lie on the Periplasmic side of the membrane. A helical membrane pass occupies residues 236–256 (AGELVIVCTAIVGAGLGFLWF). The Cytoplasmic segment spans residues 257 to 262 (NTYPAQ). A helical membrane pass occupies residues 263–283 (VFMGDVGSLALGGALGIIAVL). The Periplasmic portion of the chain corresponds to 284–287 (LRQE). The chain crosses the membrane as a helical span at residues 288–308 (FLLVIMGGVFVVETLSVILQV). Topologically, residues 309-337 (GSFKLRGQRIFRMAPIHHHYELKGWPEPR) are cytoplasmic. A helical transmembrane segment spans residues 338–358 (VIVRFWIISLMLVLIGLATLK). Residues 359 to 360 (VR) are Periplasmic-facing.

Belongs to the glycosyltransferase 4 family. MraY subfamily. Mg(2+) is required as a cofactor.

It localises to the cell inner membrane. The catalysed reaction is UDP-N-acetyl-alpha-D-muramoyl-L-alanyl-gamma-D-glutamyl-meso-2,6-diaminopimeloyl-D-alanyl-D-alanine + di-trans,octa-cis-undecaprenyl phosphate = di-trans,octa-cis-undecaprenyl diphospho-N-acetyl-alpha-D-muramoyl-L-alanyl-D-glutamyl-meso-2,6-diaminopimeloyl-D-alanyl-D-alanine + UMP. It functions in the pathway cell wall biogenesis; peptidoglycan biosynthesis. In terms of biological role, catalyzes the initial step of the lipid cycle reactions in the biosynthesis of the cell wall peptidoglycan: transfers peptidoglycan precursor phospho-MurNAc-pentapeptide from UDP-MurNAc-pentapeptide onto the lipid carrier undecaprenyl phosphate, yielding undecaprenyl-pyrophosphoryl-MurNAc-pentapeptide, known as lipid I. The protein is Phospho-N-acetylmuramoyl-pentapeptide-transferase of Shigella boydii serotype 18 (strain CDC 3083-94 / BS512).